The chain runs to 120 residues: Large ribosomal subunit protein uL18 (120 aa).

Positions 1–25 are disordered; it reads MKQTRTAARQSRHQRIRRKVKGTSD. The segment covering 10 to 21 has biased composition (basic residues); the sequence is QSRHQRIRRKVK.

Belongs to the universal ribosomal protein uL18 family. In terms of assembly, part of the 50S ribosomal subunit; part of the 5S rRNA/L5/L18/L25 subcomplex. Contacts the 5S and 23S rRNAs.

This is one of the proteins that bind and probably mediate the attachment of the 5S RNA into the large ribosomal subunit, where it forms part of the central protuberance. The chain is Large ribosomal subunit protein uL18 from Thermosynechococcus vestitus (strain NIES-2133 / IAM M-273 / BP-1).